A 277-amino-acid polypeptide reads, in one-letter code: 5'-nucleotidase SurE (277 aa).

The a divalent metal cation site is built by Asp16, Asp17, Ser48, and Asn101.

The protein belongs to the SurE nucleotidase family. A divalent metal cation is required as a cofactor.

It is found in the cytoplasm. It catalyses the reaction a ribonucleoside 5'-phosphate + H2O = a ribonucleoside + phosphate. In terms of biological role, nucleotidase that shows phosphatase activity on nucleoside 5'-monophosphates. The sequence is that of 5'-nucleotidase SurE from Parvibaculum lavamentivorans (strain DS-1 / DSM 13023 / NCIMB 13966).